Here is a 22-residue protein sequence, read N- to C-terminus: Zinc metalloproteinase oxiagin (22 aa).

Positions 14 to 22 (CYIEFYVVV) constitute a Peptidase M12B domain.

This sequence belongs to the venom metalloproteinase (M12B) family. P-III subfamily. P-IIId sub-subfamily. Heterotrimer; disulfide-linked. The heterotrimer consists of 1 metalloproteinase chain and 2 lectin chains. It depends on Zn(2+) as a cofactor. In terms of processing, N-glycosylated. As to expression, expressed by the venom gland.

The protein resides in the secreted. Snake venom metalloproteinase that inhibits the classical complement pathway dose-dependently. It acts by binding to carbohydrates of IgG within the antibody-sensitized sheep erythrocytes (EA) complex, and thus prevents interaction of component C2 with immobilized C4b. Also induces cation-independent hemagglutination that can be prevented by D-galactose pretreatment. The polypeptide is Zinc metalloproteinase oxiagin (Naja oxiana (Central Asian cobra)).